A 322-amino-acid chain; its full sequence is 4-hydroxythreonine-4-phosphate dehydrogenase (322 aa).

Thr-132 provides a ligand contact to substrate. 3 residues coordinate a divalent metal cation: His-160, His-205, and His-260. Positions 268, 277, and 286 each coordinate substrate.

Belongs to the PdxA family. As to quaternary structure, homodimer. The cofactor is Zn(2+). Mg(2+) is required as a cofactor. Co(2+) serves as cofactor.

It localises to the cytoplasm. It catalyses the reaction 4-(phosphooxy)-L-threonine + NAD(+) = 3-amino-2-oxopropyl phosphate + CO2 + NADH. The protein operates within cofactor biosynthesis; pyridoxine 5'-phosphate biosynthesis; pyridoxine 5'-phosphate from D-erythrose 4-phosphate: step 4/5. In terms of biological role, catalyzes the NAD(P)-dependent oxidation of 4-(phosphooxy)-L-threonine (HTP) into 2-amino-3-oxo-4-(phosphooxy)butyric acid which spontaneously decarboxylates to form 3-amino-2-oxopropyl phosphate (AHAP). The chain is 4-hydroxythreonine-4-phosphate dehydrogenase from Xanthomonas campestris pv. campestris (strain B100).